A 633-amino-acid chain; its full sequence is Uracil permease (633 aa).

The next 12 membrane-spanning stretches (helical) occupy residues 143–163, 173–193, 197–217, 242–262, 268–288, 310–330, 350–370, 400–420, 442–462, 465–485, 521–541, and 559–579; these read WWQC…FVVL, LSFP…WPVI, VMAI…VSLM, YEFM…LVPP, LFTV…IWAI, FSWA…TMVI, LVCI…VTAA, AGVF…NISA, GSLF…MATS, FTMA…VVCS, ALAA…AEVG, and YWVG…FFPV.

Belongs to the purine-cytosine permease (2.A.39) family. Glycosylated (possible); but there is not yet direct biochemical evidence for it.

It is found in the membrane. Functionally, transport of uracil. The polypeptide is Uracil permease (FUR4) (Saccharomyces cerevisiae (strain ATCC 204508 / S288c) (Baker's yeast)).